A 487-amino-acid polypeptide reads, in one-letter code: Benzaldehyde dehydrogenase [NAD(+)] (487 aa).

Residue G232 to G237 participates in NAD(+) binding. Residues E254 and C288 contribute to the active site.

This sequence belongs to the aldehyde dehydrogenase family. Homotetramer.

The catalysed reaction is benzaldehyde + NAD(+) + H2O = benzoate + NADH + 2 H(+). The sequence is that of Benzaldehyde dehydrogenase [NAD(+)] (xylC) from Pseudomonas putida (Arthrobacter siderocapsulatus).